Reading from the N-terminus, the 455-residue chain is Ribulose bisphosphate carboxylase large chain (455 aa).

Lys5 carries the N6,N6,N6-trimethyllysine modification. 2 residues coordinate substrate: Asn114 and Thr164. The active-site Proton acceptor is Lys166. Lys168 contributes to the substrate binding site. Mg(2+) contacts are provided by Lys192, Asp194, and Glu195. Position 192 is an N6-carboxylysine (Lys192). His285 functions as the Proton acceptor in the catalytic mechanism. Residues Arg286, His318, and Ser370 each coordinate substrate.

Belongs to the RuBisCO large chain family. Type I subfamily. In terms of assembly, heterohexadecamer of 8 large chains and 8 small chains; disulfide-linked. The disulfide link is formed within the large subunit homodimers. Mg(2+) serves as cofactor. Post-translationally, the disulfide bond which can form in the large chain dimeric partners within the hexadecamer appears to be associated with oxidative stress and protein turnover.

The protein resides in the plastid. Its subcellular location is the chloroplast. It catalyses the reaction 2 (2R)-3-phosphoglycerate + 2 H(+) = D-ribulose 1,5-bisphosphate + CO2 + H2O. The catalysed reaction is D-ribulose 1,5-bisphosphate + O2 = 2-phosphoglycolate + (2R)-3-phosphoglycerate + 2 H(+). In terms of biological role, ruBisCO catalyzes two reactions: the carboxylation of D-ribulose 1,5-bisphosphate, the primary event in carbon dioxide fixation, as well as the oxidative fragmentation of the pentose substrate in the photorespiration process. Both reactions occur simultaneously and in competition at the same active site. The polypeptide is Ribulose bisphosphate carboxylase large chain (Lupinus microcarpus (Chick lupine)).